A 314-amino-acid polypeptide reads, in one-letter code: Olfactory receptor 9A1 (314 aa).

At 1–24 (MLGNYSSATEFFLLGFPGSQEVCR) the chain is on the extracellular side. The N-linked (GlcNAc...) asparagine glycan is linked to Asn4. A helical membrane pass occupies residues 25 to 45 (ILFATFFLLYAVTVMGNVVII). Residues 46 to 64 (ITVCVDKCLQSPIYFFLGH) lie on the Cytoplasmic side of the membrane. The chain crosses the membrane as a helical span at residues 65–85 (LCVLEILITSTAVPFMLWGLL). Residues 86–99 (LPSTQIMSLTACAA) lie on the Extracellular side of the membrane. Cysteines 97 and 179 form a disulfide. A helical transmembrane segment spans residues 100–120 (QLYLYLSLGTLELALMGVMAV). At 121–140 (DRYVAVCNPLRYNIIMNSST) the chain is on the cytoplasmic side. The chain crosses the membrane as a helical span at residues 141-161 (FIWVIIVSWVLGFLSEIWPVY). The Extracellular segment spans residues 162-196 (ATFQLTFCKSSVLDHFYCDRGQLLKVSCEDTLFRE). The chain crosses the membrane as a helical span at residues 197 to 217 (FILFLMAVFIIIGSLIPTIVS). Topologically, residues 218 to 239 (YTYIISTNLKIPSASGWRKSFS) are cytoplasmic. Residues 240–260 (TCASHFTYVVIGYGSCLFLYV) traverse the membrane as a helical segment. Topologically, residues 261-271 (KPKQTQAAEYN) are extracellular. The helical transmembrane segment at 272 to 292 (RVVSLLVLVVTPFLNPFIFTL) threads the bilayer. At 293–314 (RNDKFIQAFGDGMKHCYKLLKN) the chain is on the cytoplasmic side.

This sequence belongs to the G-protein coupled receptor 1 family.

It is found in the cell membrane. Functionally, odorant receptor. The polypeptide is Olfactory receptor 9A1 (OR9A1P) (Homo sapiens (Human)).